The chain runs to 223 residues: Protein disulfide-isomerase-like protein EhSep2 (223 aa).

Positions 1-17 (MALRSLTLLCAAAGASA) are cleaved as a signal peptide. The Thioredoxin domain occupies 18–125 (GAIELTPDNF…DELKKFAENE (108 aa)). Residue selenocysteine 47 is a non-standard amino acid, selenocysteine. Residues 155–201 (EKRTEMLETLKKELADAESTHEALLKELQATYKESMDKLEKLKEESA) adopt a coiled-coil conformation. Residues 201–223 (APKIKLLKAATPAPKAEGAKDEV) are disordered. Positions 203–216 (KIKLLKAATPAPKA) are enriched in low complexity. Residues 220–223 (KDEV) carry the Prevents secretion from ER motif.

It belongs to the protein disulfide isomerase family.

Its subcellular location is the endoplasmic reticulum lumen. This Emiliania huxleyi (Coccolithophore) protein is Protein disulfide-isomerase-like protein EhSep2 (SEP2).